Consider the following 280-residue polypeptide: Mitochondrial outer membrane protein porin 2 (280 aa).

This sequence belongs to the eukaryotic mitochondrial porin (TC 1.B.8.1) family. In terms of tissue distribution, expressed in roots, stems, leaves, palea, lemma and pollen.

The protein resides in the mitochondrion outer membrane. In terms of biological role, forms a channel through the mitochondrial outer membrane that allows diffusion of small hydrophilic molecules. The channel adopts an open conformation at low or zero membrane potential and a closed conformation at potentials above 30-40 mV. The open state has a weak anion selectivity whereas the closed state is cation-selective. The polypeptide is Mitochondrial outer membrane protein porin 2 (VDAC2) (Oryza sativa subsp. japonica (Rice)).